The following is a 361-amino-acid chain: UDP-N-acetylglucosamine--N-acetylmuramyl-(pentapeptide) pyrophosphoryl-undecaprenol N-acetylglucosamine transferase (361 aa).

Residues 11-13 (TGG), N124, R162, S193, and Q292 contribute to the UDP-N-acetyl-alpha-D-glucosamine site.

Belongs to the glycosyltransferase 28 family. MurG subfamily.

It is found in the cell inner membrane. It carries out the reaction di-trans,octa-cis-undecaprenyl diphospho-N-acetyl-alpha-D-muramoyl-L-alanyl-D-glutamyl-meso-2,6-diaminopimeloyl-D-alanyl-D-alanine + UDP-N-acetyl-alpha-D-glucosamine = di-trans,octa-cis-undecaprenyl diphospho-[N-acetyl-alpha-D-glucosaminyl-(1-&gt;4)]-N-acetyl-alpha-D-muramoyl-L-alanyl-D-glutamyl-meso-2,6-diaminopimeloyl-D-alanyl-D-alanine + UDP + H(+). Its pathway is cell wall biogenesis; peptidoglycan biosynthesis. Cell wall formation. Catalyzes the transfer of a GlcNAc subunit on undecaprenyl-pyrophosphoryl-MurNAc-pentapeptide (lipid intermediate I) to form undecaprenyl-pyrophosphoryl-MurNAc-(pentapeptide)GlcNAc (lipid intermediate II). This Elusimicrobium minutum (strain Pei191) protein is UDP-N-acetylglucosamine--N-acetylmuramyl-(pentapeptide) pyrophosphoryl-undecaprenol N-acetylglucosamine transferase.